Consider the following 274-residue polypeptide: NADPH-dependent 7-cyano-7-deazaguanine reductase (274 aa).

80–82 (VES) contributes to the substrate binding site. 82 to 83 (SK) contacts NADPH. The Thioimide intermediate role is filled by cysteine 181. Catalysis depends on aspartate 188, which acts as the Proton donor. 220-221 (HE) is a binding site for substrate. An NADPH-binding site is contributed by 249-250 (RG).

This sequence belongs to the GTP cyclohydrolase I family. QueF type 2 subfamily. Homodimer.

The protein localises to the cytoplasm. It carries out the reaction 7-aminomethyl-7-carbaguanine + 2 NADP(+) = 7-cyano-7-deazaguanine + 2 NADPH + 3 H(+). The protein operates within tRNA modification; tRNA-queuosine biosynthesis. Functionally, catalyzes the NADPH-dependent reduction of 7-cyano-7-deazaguanine (preQ0) to 7-aminomethyl-7-deazaguanine (preQ1). This Burkholderia ambifaria (strain MC40-6) protein is NADPH-dependent 7-cyano-7-deazaguanine reductase.